The chain runs to 138 residues: UPF0355 protein SSP2326 (138 aa).

The tract at residues 115–138 (NVAFETNQTKSNSHYSEETNGPKS) is disordered. The span at 118 to 138 (FETNQTKSNSHYSEETNGPKS) shows a compositional bias: polar residues.

It belongs to the UPF0355 family.

The sequence is that of UPF0355 protein SSP2326 from Staphylococcus saprophyticus subsp. saprophyticus (strain ATCC 15305 / DSM 20229 / NCIMB 8711 / NCTC 7292 / S-41).